The chain runs to 99 residues: UPF0235 protein Avin_03050 (99 aa).

Residues 66–99 (VSLESGESNRQKRVRIRRPRQLPALPGLAPRPDA) form a disordered region. Basic residues predominate over residues 76 to 85 (QKRVRIRRPR).

It belongs to the UPF0235 family.

This is UPF0235 protein Avin_03050 from Azotobacter vinelandii (strain DJ / ATCC BAA-1303).